The primary structure comprises 20 residues: YVVPAAKLEAIYPKGLRVSI.

This sequence belongs to the insect beta-1,3-glucan binding protein family. In terms of assembly, monomer.

The protein localises to the secreted. Functionally, involved in the recognition of invading microorganisms causing their aggregation. Activates the phenoloxidase cascade. Binds specifically to beta-1,3-glucan. Binds the A.niger cell wall component alpha-1,3-glucan, a fungal pathogen-associated molecular pattern (PAMP) that activates the host immune response. The sequence is that of Beta-1,3-glucan-binding protein 2 from Galleria mellonella (Greater wax moth).